Consider the following 291-residue polypeptide: 4-hydroxy-tetrahydrodipicolinate synthase (291 aa).

Thr45 is a pyruvate binding site. The Proton donor/acceptor role is filled by Tyr133. Lys161 functions as the Schiff-base intermediate with substrate in the catalytic mechanism. Ile203 serves as a coordination point for pyruvate.

It belongs to the DapA family. Homotetramer; dimer of dimers.

It is found in the cytoplasm. It catalyses the reaction L-aspartate 4-semialdehyde + pyruvate = (2S,4S)-4-hydroxy-2,3,4,5-tetrahydrodipicolinate + H2O + H(+). Its pathway is amino-acid biosynthesis; L-lysine biosynthesis via DAP pathway; (S)-tetrahydrodipicolinate from L-aspartate: step 3/4. Catalyzes the condensation of (S)-aspartate-beta-semialdehyde [(S)-ASA] and pyruvate to 4-hydroxy-tetrahydrodipicolinate (HTPA). In Neisseria meningitidis serogroup C (strain 053442), this protein is 4-hydroxy-tetrahydrodipicolinate synthase.